The chain runs to 125 residues: Unclassified hydrophobin 8 (125 aa).

A signal peptide spans 1–20 (MMFSKPVVLATTALATFAAA). 4 disulfide bridges follow: Cys31–Cys105, Cys38–Cys99, Cys39–Cys90, and Cys106–Cys119.

Belongs to the fungal hydrophobin family. In terms of assembly, self-assembles to form functional amyloid fibrils called rodlets. Self-assembly into fibrillar rodlets occurs spontaneously at hydrophobic:hydrophilic interfaces and the rodlets further associate laterally to form amphipathic monolayers.

The protein resides in the secreted. It is found in the cell wall. Functionally, aerial growth, conidiation, and dispersal of filamentous fungi in the environment rely upon a capability of their secreting small amphipathic proteins called hydrophobins (HPBs) with low sequence identity. Class I can self-assemble into an outermost layer of rodlet bundles on aerial cell surfaces, conferring cellular hydrophobicity that supports fungal growth, development and dispersal; whereas Class II form highly ordered films at water-air interfaces through intermolecular interactions but contribute nothing to the rodlet structure. Hydph8 is an unclassified hydrophobin involved in mycelial growth. In Pleurotus ostreatus (strain PC15) (Oyster mushroom), this protein is Unclassified hydrophobin 8.